A 1040-amino-acid polypeptide reads, in one-letter code: FHF complex subunit HOOK-interacting protein 1A (1040 aa).

Disordered regions lie at residues 555-613 (PQQL…PIDP), 653-746 (SEDM…AAHP), and 769-808 (LMEQ…EDEE). Over residues 653–664 (SEDMKDSQEEAA) the composition is skewed to basic and acidic residues. The span at 677–690 (VPINNGPLLSTQPE) shows a compositional bias: polar residues. Basic and acidic residues-rich tracts occupy residues 696–719 (EWNR…REPE) and 783–804 (TKEE…KKEL).

It belongs to the FHIP family. In terms of assembly, may be a component of the FTS/Hook/FHIP complex (FHF complex), composed of AKTIP/FTS, FHIP1B, and one or more members of the Hook family of proteins HOOK1, HOOK2, and HOOK3. May interact directly with AKTIP/FTS.

Probable component of the FTS/Hook/FHIP complex (FHF complex). FHF complex promotes the distribution of AP-4 complex to the perinuclear area of the cell. This is FHF complex subunit HOOK-interacting protein 1A from Homo sapiens (Human).